We begin with the raw amino-acid sequence, 206 residues long: MARYLGPKLKLSRREGTDLFLKSGVRAIDTKCKLEQAPGQHGARKPRLSDYGVQLREKQKVRRIYGVLERQFRNYYKEATRLKGNTGENLLSLLEGRLDNVVYRMGFGATRAESRQMVSHKAIMVNGRVVNIASYQVSPNDVVSVREKSKKQSRIKAALELAEQREKPTWLEVDAVKMEGVFKRIPERADLSADINEHLIVELYSK.

An S4 RNA-binding domain is found at 96–156; it reads GRLDNVVYRM…EKSKKQSRIK (61 aa).

The protein belongs to the universal ribosomal protein uS4 family. As to quaternary structure, part of the 30S ribosomal subunit. Contacts protein S5. The interaction surface between S4 and S5 is involved in control of translational fidelity.

Functionally, one of the primary rRNA binding proteins, it binds directly to 16S rRNA where it nucleates assembly of the body of the 30S subunit. In terms of biological role, with S5 and S12 plays an important role in translational accuracy. The chain is Small ribosomal subunit protein uS4 from Photorhabdus laumondii subsp. laumondii (strain DSM 15139 / CIP 105565 / TT01) (Photorhabdus luminescens subsp. laumondii).